The chain runs to 453 residues: Chromosomal replication initiator protein DnaA (453 aa).

Residues 1 to 73 (MELSPQDLWT…ADVVEEILGY (73 aa)) are domain I, interacts with DnaA modulators. The tract at residues 73–110 (YSIDIQLTSTQGENIAIVGETQVSAYYPTLSGEHPKPI) is domain II. The interval 111-327 (KLNPKYTFSR…GALIRAITYI (217 aa)) is domain III, AAA+ region. Positions 155, 157, 158, and 159 each coordinate ATP. The interval 328–453 (SISGLSMTVE…HLASRTQKTT (126 aa)) is domain IV, binds dsDNA.

The protein belongs to the DnaA family. In terms of assembly, oligomerizes as a right-handed, spiral filament on DNA at oriC.

It is found in the cytoplasm. In terms of biological role, plays an essential role in the initiation and regulation of chromosomal replication. ATP-DnaA binds to the origin of replication (oriC) to initiate formation of the DNA replication initiation complex once per cell cycle. Binds the DnaA box (a 9 base pair repeat at the origin) and separates the double-stranded (ds)DNA. Forms a right-handed helical filament on oriC DNA; dsDNA binds to the exterior of the filament while single-stranded (ss)DNA is stabiized in the filament's interior. The ATP-DnaA-oriC complex binds and stabilizes one strand of the AT-rich DNA unwinding element (DUE), permitting loading of DNA polymerase. After initiation quickly degrades to an ADP-DnaA complex that is not apt for DNA replication. Binds acidic phospholipids. The protein is Chromosomal replication initiator protein DnaA of Gloeothece citriformis (strain PCC 7424) (Cyanothece sp. (strain PCC 7424)).